We begin with the raw amino-acid sequence, 369 residues long: Mycofactocin maturase MftC (369 aa).

A Radical SAM core domain is found at 16–232 (LDAPICLTWE…KGERVLTGDS (217 aa)). [4Fe-4S] cluster-binding residues include C30, C34, C37, C251, C258, C269, C310, C313, C319, C323, and C341. The interval 347 to 369 (APALAQERHAPRPRVDHSRGSRE) is disordered. Positions 352-369 (QERHAPRPRVDHSRGSRE) are enriched in basic and acidic residues.

Belongs to the radical SAM superfamily. MftC family. As to quaternary structure, interacts with MftB. [4Fe-4S] cluster serves as cofactor.

The catalysed reaction is [mycofactocin precursor peptide]-C-terminal glycyl-L-valyl-L-tyrosine + S-adenosyl-L-methionine = [mycofactocin precursor peptide]-C-terminal glycyl-N-{[2-(4-hydroxyphenyl)ethenyl]-3-methylbutanamide} + 5'-deoxyadenosine + L-methionine + CO2. The enzyme catalyses [mycofactocin precursor peptide]-C-terminal glycyl-N-{[2-(4-hydroxyphenyl)ethenyl]-3-methylbutanamide} + AH2 + S-adenosyl-L-methionine = [mycofactocin precursor peptide]-C-terminal glycyl-N-{5-[(4-hydroxyphenyl)methyl]-4,4-dimethyl-2-oxopyrrolidin-3-yl}acetamide + 5'-deoxyadenosine + L-methionine + A + H(+). In terms of biological role, radical S-adenosylmethionine (SAM) enzyme responsible for the first step of the biosynthesis of the enzyme cofactor mycofactocin (MFT). Catalyzes two reactions at the C-terminus of the mycofactocin precursor (the MftA peptide). The first one is the oxidative decarboxylation of the C-terminal L-tyrosine of MftA, forming an unsaturated tyramine moiety. The second reaction is the cross-linking of the tyramine with the penultimate L-valine residue, forming a five-membered lactam ring. Its activity requires the presence of the MftB chaperone. The sequence is that of Mycofactocin maturase MftC from Mycobacterium ulcerans (strain Agy99).